The primary structure comprises 175 residues: NADH-ubiquinone oxidoreductase chain 6 (175 aa).

6 helical membrane passes run 1–21 (MMYI…GFSS), 24–44 (SPVY…GIIM), 51–71 (LGLV…GYTI), 87–107 (VVLS…VWLF), 113–133 (LVGF…GSFG), and 148–168 (YGFW…FIAI).

It belongs to the complex I subunit 6 family. In terms of assembly, core subunit of respiratory chain NADH dehydrogenase (Complex I) which is composed of 45 different subunits.

It localises to the mitochondrion inner membrane. The enzyme catalyses a ubiquinone + NADH + 5 H(+)(in) = a ubiquinol + NAD(+) + 4 H(+)(out). Its function is as follows. Core subunit of the mitochondrial membrane respiratory chain NADH dehydrogenase (Complex I) which catalyzes electron transfer from NADH through the respiratory chain, using ubiquinone as an electron acceptor. Essential for the catalytic activity and assembly of complex I. The sequence is that of NADH-ubiquinone oxidoreductase chain 6 (MT-ND6) from Mammuthus primigenius (Siberian woolly mammoth).